A 350-amino-acid polypeptide reads, in one-letter code: Ion-translocating oxidoreductase complex subunit D (350 aa).

The next 3 helical transmembrane spans lie at 20-39 (IMMLVTLATVPGIAVQWYFF), 89-109 (IPPLAPWWMVVLGTAFAVIIA), and 123-143 (PAMIGYVVLLISFPVQMTNWL). An FMN phosphoryl threonine modification is found at threonine 187. 5 helical membrane-spanning segments follow: residues 215–235 (LAGLGWQWVNLAYLAGGLFLL), 244–264 (IPVSFLVTLAVCSTLGWLIAP), 267–287 (FLSPLMHLLSGATMLGAFFIL), 301–321 (LVFGALVGLLVWLIRSFGGYP), and 322–342 (DGVAFAVLLANITVPLIDYYT).

The protein belongs to the NqrB/RnfD family. In terms of assembly, the complex is composed of six subunits: RnfA, RnfB, RnfC, RnfD, RnfE and RnfG. FMN is required as a cofactor.

The protein localises to the cell inner membrane. Part of a membrane-bound complex that couples electron transfer with translocation of ions across the membrane. The protein is Ion-translocating oxidoreductase complex subunit D of Cronobacter sakazakii (strain ATCC BAA-894) (Enterobacter sakazakii).